We begin with the raw amino-acid sequence, 804 residues long: Endoplasmin (804 aa).

Residues 1–21 (MRVLWVLGLCCVLLTFGFVRA) form the signal peptide. An SRT pseudosubstrate motif motif is present at residues 42 to 44 (SRT). A glycan (N-linked (GlcNAc...) asparagine) is linked at asparagine 62. Serine 64 carries the post-translational modification Phosphoserine. N-linked (GlcNAc...) asparagine glycosylation occurs at asparagine 107. ATP contacts are provided by asparagine 107, aspartate 149, and asparagine 162. An N6-(2-hydroxyisobutyryl)lysine modification is found at lysine 168. Serine 172 is subject to Phosphoserine. Phenylalanine 199 contacts ATP. Asparagine 217 is a glycosylation site (N-linked (GlcNAc...) asparagine). The disordered stretch occupies residues 288–323 (TVEEPLEEDETAQEEKEEADDEAAVEEEEEEKKPKT). Residues 289-317 (VEEPLEEDETAQEEKEEADDEAAVEEEEE) are compositionally biased toward acidic residues. At serine 403 the chain carries Phosphoserine. Lysine 404 is subject to N6-succinyllysine. Asparagine 445 is a glycosylation site (N-linked (GlcNAc...) asparagine). Serine 447 is modified (phosphoserine). At lysine 479 the chain carries N6-acetyllysine. 2 N-linked (GlcNAc...) asparagine glycosylation sites follow: asparagine 481 and asparagine 502. At lysine 633 the chain carries N6-succinyllysine. The segment at 749–804 (IDPEAQVEEEPEEEPEDTTEDTTDDSEQDEEETDAGAEEEEEEQETEKEPTEKDEL) is disordered. Over residues 753-794 (AQVEEEPEEEPEDTTEDTTDDSEQDEEETDAGAEEEEEEQET) the composition is skewed to acidic residues. Positions 795–804 (EKEPTEKDEL) are enriched in basic and acidic residues. The Prevents secretion from ER motif lies at 801-804 (KDEL).

This sequence belongs to the heat shock protein 90 family. In terms of assembly, homodimer; disulfide-linked. Component of an EIF2 complex at least composed of CELF1/CUGBP1, CALR, CALR3, EIF2S1, EIF2S2, HSP90B1 and HSPA5. Part of a large chaperone multiprotein complex comprising DNAJB11, HSP90B1, HSPA5, HYOU, PDIA2, PDIA4, PDIA6, PPIB, SDF2L1, UGGT1 and very small amounts of ERP29, but not, or at very low levels, CALR nor CANX. Interacts with AIMP1; regulates its retention in the endoplasmic reticulum. Hyperglycosylated form interacts with OS9; promoting its degradation by the endoplasmic reticulum associated degradation (ERAD). Interacts with CNPY3. This interaction is disrupted in the presence of ATP. Interacts with TLR4 and TLR9, but not with TLR3. Interacts with MZB1 in a calcium-dependent manner. Interacts with METTL23. Interacts with IL1B; the interaction facilitates cargo translocation into the ERGIC. Interacts with EIF2AK3. Phosphorylated by CK2. Post-translationally, N-glycosylated cotranslationally at Asn-217 by STT3A-containing OST-A complex: this glycosylation is constitutive. In response to various stress, 5 additional facultative sites (Asn-62, Asn-107, Asn-445, Asn-481 and Asn-502) can be glycosylated post-translationally by STT3B-containing OST-B complex, leading to a hyperglycosylated form that is degraded by the ER-associated degradation (ERAD) pathway. In normal conditions, the OST-A complex together with CCDC134 prevent glycosylation at facultative sites during protein folding, thereby preventing hyperglycosylation. Mechanistically, nascent HSP90B1 is tethered during translation to a specialized CCDC134-containing translocon that forms a microenvironment for its folding, in which STT3A associates with the SRT pseudosubstrate motif, and prevents access to facultative glycosylation sites until folding is completed, rendering its facultative sites inaccessible to the OST-B complex.

The protein resides in the endoplasmic reticulum lumen. The protein localises to the sarcoplasmic reticulum lumen. Its subcellular location is the melanosome. The catalysed reaction is ATP + H2O = ADP + phosphate + H(+). In terms of biological role, ATP-dependent chaperone involved in the processing of proteins in the endoplasmic reticulum, regulating their transport. Together with MESD, acts as a modulator of the Wnt pathway by promoting the folding of LRP6, a coreceptor of the canonical Wnt pathway. When associated with CNPY3, required for proper folding of Toll-like receptors. Promotes folding and trafficking of TLR4 to the cell surface. May participate in the unfolding of cytosolic leaderless cargos (lacking the secretion signal sequence) such as the interleukin 1/IL-1 to facilitate their translocation into the ERGIC (endoplasmic reticulum-Golgi intermediate compartment) and secretion; the translocation process is mediated by the cargo receptor TMED10. The protein is Endoplasmin of Rattus norvegicus (Rat).